Reading from the N-terminus, the 936-residue chain is 2-oxoglutarate dehydrogenase E1 component (936 aa).

Belongs to the alpha-ketoglutarate dehydrogenase family. In terms of assembly, homodimer. Part of the 2-oxoglutarate dehydrogenase (OGDH) complex composed of E1 (2-oxoglutarate dehydrogenase), E2 (dihydrolipoamide succinyltransferase) and E3 (dihydrolipoamide dehydrogenase); the complex contains multiple copies of the three enzymatic components (E1, E2 and E3). The cofactor is thiamine diphosphate.

The enzyme catalyses N(6)-[(R)-lipoyl]-L-lysyl-[protein] + 2-oxoglutarate + H(+) = N(6)-[(R)-S(8)-succinyldihydrolipoyl]-L-lysyl-[protein] + CO2. In terms of biological role, E1 component of the 2-oxoglutarate dehydrogenase (OGDH) complex which catalyzes the decarboxylation of 2-oxoglutarate, the first step in the conversion of 2-oxoglutarate to succinyl-CoA and CO(2). The protein is 2-oxoglutarate dehydrogenase E1 component (sucA) of Rickettsia prowazekii (strain Madrid E).